The following is a 327-amino-acid chain: ATP-dependent (S)-NAD(P)H-hydrate dehydratase (327 aa).

The YjeF C-terminal domain maps to 11 to 313 (LLTRVKRIIP…RHVGKAYNAL (303 aa)). Residues glycine 121 and 174 to 180 (NVIEFKR) each bind (6S)-NADPHX. ATP is bound by residues 209 to 213 (KGQSD) and 228 to 237 (GGLKRCGGQG). Aspartate 238 is a binding site for (6S)-NADPHX.

It belongs to the NnrD/CARKD family. Mg(2+) serves as cofactor.

Its subcellular location is the cytoplasm. It catalyses the reaction (6S)-NADHX + ATP = ADP + phosphate + NADH + H(+). It carries out the reaction (6S)-NADPHX + ATP = ADP + phosphate + NADPH + H(+). In terms of biological role, catalyzes the dehydration of the S-form of NAD(P)HX at the expense of ATP, which is converted to ADP. Together with NAD(P)HX epimerase, which catalyzes the epimerization of the S- and R-forms, the enzyme allows the repair of both epimers of NAD(P)HX, a damaged form of NAD(P)H that is a result of enzymatic or heat-dependent hydration. The protein is ATP-dependent (S)-NAD(P)H-hydrate dehydratase of Schizosaccharomyces pombe (strain 972 / ATCC 24843) (Fission yeast).